Here is a 405-residue protein sequence, read N- to C-terminus: Magnesium-protoporphyrin IX monomethyl ester [oxidative] cyclase, chloroplastic (405 aa).

The transit peptide at 1–44 directs the protein to the chloroplast; that stretch reads MAAEMALVKPITPKFINPMRTFSSSSKFSTIKMSATSQSNTTTT. The span at 33 to 47 shows a compositional bias: low complexity; it reads MSATSQSNTTTTATK. Residues 33–54 form a disordered region; sequence MSATSQSNTTTTATKPSKKGNK.

It belongs to the AcsF family. It depends on Fe cation as a cofactor.

The protein resides in the plastid. The protein localises to the chloroplast. The enzyme catalyses Mg-protoporphyrin IX 13-monomethyl ester + 3 NADPH + 3 O2 + 2 H(+) = 3,8-divinyl protochlorophyllide a + 3 NADP(+) + 5 H2O. It participates in porphyrin-containing compound metabolism; chlorophyll biosynthesis. In terms of biological role, catalyzes the formation of the isocyclic ring in chlorophyll biosynthesis. Mediates the cyclase reaction, which results in the formation of divinylprotochlorophyllide (Pchlide) characteristic of all chlorophylls from magnesium-protoporphyrin IX 13-monomethyl ester (MgPMME). The protein is Magnesium-protoporphyrin IX monomethyl ester [oxidative] cyclase, chloroplastic (CRD1) of Euphorbia esula (Leafy spurge).